The primary structure comprises 563 residues: Solute carrier family 22 member 6 (563 aa).

Over 1 to 9 (MAFNDLLQQ) the chain is Cytoplasmic. A helical transmembrane segment spans residues 10–30 (VGGVGRFQQIQVTLVVLPLLL). Topologically, residues 31-135 (MASHNTLQNF…LVCSHRALRQ (105 aa)) are extracellular. Asn39, Asn56, Asn92, Asn97, and Asn113 each carry an N-linked (GlcNAc...) asparagine glycan. A helical membrane pass occupies residues 136–156 (LAQSLYMVGVLLGAMVFGYLA). Residues 157-164 (DRLGRRKV) lie on the Cytoplasmic side of the membrane. The helical transmembrane segment at 165–187 (LILNYLQTAVSGTCAAFAPNFPI) threads the bilayer. Topologically, residues 188–190 (YCA) are extracellular. A helical transmembrane segment spans residues 191-213 (FRLLSGMALAGISLNCMTLNVEW). Topologically, residues 214–224 (MPIHTRACVGT) are cytoplasmic. Residues 225–245 (LIGYVYSLGQFLLAGVAYAVP) form a helical membrane-spanning segment. The Extracellular portion of the chain corresponds to 246–248 (HWR). Residues 249–269 (HLQLLVSAPFFAFFIYSWFFI) traverse the membrane as a helical segment. Residues 270-337 (ESARWHSSSG…ELLRCPTLRH (68 aa)) are Cytoplasmic-facing. The chain crosses the membrane as a helical span at residues 338 to 358 (LFLCLSMLWFATSFAYYGLVM). The Extracellular segment spans residues 359-368 (DLQGFGVSIY). A helical membrane pass occupies residues 369–389 (LIQVIFGAVDLPAKLVGFLVI). At 390 to 395 (NSLGRR) the chain is on the cytoplasmic side. A helical membrane pass occupies residues 396–416 (PAQMAALLLAGICILLNGVIP). The Extracellular segment spans residues 417–425 (QDQSIVRTS). A helical transmembrane segment spans residues 426-446 (LAVLGKGCLAASFNCIFLYTG). Residues 447–455 (ELYPTMIRQ) are Cytoplasmic-facing. A helical transmembrane segment spans residues 456-475 (TGMGMGSTMARVGSIVSPLV). Residues 476–484 (SMTAELYPS) are Extracellular-facing. A helical membrane pass occupies residues 485-505 (MPLFIYGAVPVAASAVTVLLP). At 506 to 563 (ETLGQPLPDTVQDLESRWAPTQKEAGIYPRKGKQTRQQQEHQKYMVPLQASAQEKNGL) the chain is on the cytoplasmic side. The segment at 525 to 563 (PTQKEAGIYPRKGKQTRQQQEHQKYMVPLQASAQEKNGL) is disordered.

This sequence belongs to the major facilitator (TC 2.A.1) superfamily. Organic cation transporter (TC 2.A.1.19) family. Glycosylated. Glycosylation at Asn-113 may occur at a secondary level. Glycosylation is necessary for proper targeting of the transporter to the plasma membrane. As to expression, strongly expressed in kidney. Expressed at lower level in liver, skeletal muscle, brain and placenta. In kidney, found at the basolateral membrane of the proximal tubule. In testis, primarily localized to the basal membrane of Sertoli cells and weakly expressed in Leydig cells and vascular endothelial cells.

It is found in the basolateral cell membrane. It localises to the basal cell membrane. It catalyses the reaction (6R)-L-erythro-5,6,7,8-tetrahydrobiopterin(out) + a dicarboxylate(in) = (6R)-L-erythro-5,6,7,8-tetrahydrobiopterin(in) + a dicarboxylate(out). It carries out the reaction L-erythro-7,8-dihydrobiopterin(out) + a dicarboxylate(in) = L-erythro-7,8-dihydrobiopterin(in) + a dicarboxylate(out). The enzyme catalyses L-sepiapterin(out) + a dicarboxylate(in) = L-sepiapterin(in) + a dicarboxylate(out). The catalysed reaction is prostaglandin F2alpha(out) + a dicarboxylate(in) = prostaglandin F2alpha(in) + a dicarboxylate(out). It catalyses the reaction prostaglandin E2(out) + a dicarboxylate(in) = prostaglandin E2(in) + a dicarboxylate(out). It carries out the reaction 3',5'-cyclic AMP(out) + a dicarboxylate(in) = 3',5'-cyclic AMP(in) + a dicarboxylate(out). The enzyme catalyses 3',5'-cyclic GMP(out) + a dicarboxylate(in) = 3',5'-cyclic GMP(in) + a dicarboxylate(out). The catalysed reaction is urate(out) + a dicarboxylate(in) = urate(in) + a dicarboxylate(out). It catalyses the reaction kynurenate(out) + glutarate(in) = kynurenate(in) + glutarate(out). It carries out the reaction (indol-3-yl)acetate(out) + a dicarboxylate(in) = (indol-3-yl)acetate(in) + a dicarboxylate(out). The enzyme catalyses indoxyl sulfate(out) + a dicarboxylate(in) = indoxyl sulfate(in) + a dicarboxylate(out). The catalysed reaction is N-benzoylglycine(out) + a dicarboxylate(in) = N-benzoylglycine(in) + a dicarboxylate(out). It catalyses the reaction 3-carboxy-4-methyl-5-propyl-2-furanpropanoate(out) + a dicarboxylate(in) = 3-carboxy-4-methyl-5-propyl-2-furanpropanoate(in) + a dicarboxylate(out). Its function is as follows. Secondary active transporter that functions as a Na(+)-independent organic anion (OA)/dicarboxylate antiporter where the uptake of one molecule of OA into the cell is coupled with an efflux of one molecule of intracellular dicarboxylate such as 2-oxoglutarate or glutarate. Mediates the uptake of OA across the basolateral side of proximal tubule epithelial cells, thereby contributing to the renal elimination of endogenous OA from the systemic circulation into the urine. Functions as a biopterin transporters involved in the uptake and the secretion of coenzymes tetrahydrobiopterin (BH4), dihydrobiopterin (BH2) and sepiapterin to urine, thereby determining baseline levels of blood biopterins. Transports prostaglandin E2 (PGE2) and prostaglandin F2-alpha (PGF2-alpha) and may contribute to their renal excretion. Also mediates the uptake of cyclic nucleotides such as cAMP and cGMP. Involved in the transport of neuroactive tryptophan metabolites kynurenate (KYNA) and xanthurenate (XA) and may contribute to their secretion from the brain. May transport glutamate. Also involved in the disposition of uremic toxins and potentially toxic xenobiotics by the renal organic anion secretory pathway, helping reduce their undesired toxicological effects on the body. Uremic toxins include the indoxyl sulfate (IS), hippurate/N-benzoylglycine (HA), indole acetate (IA), 3-carboxy-4- methyl-5-propyl-2-furanpropionate (CMPF) and urate. Xenobiotics include the mycotoxin ochratoxin (OTA). May also contribute to the transport of organic compounds in testes across the blood-testis-barrier. The polypeptide is Solute carrier family 22 member 6 (Homo sapiens (Human)).